Consider the following 329-residue polypeptide: Ribosomal RNA small subunit methyltransferase H (329 aa).

Residues 34–36 (GGH), D59, F86, D112, and Q119 each bind S-adenosyl-L-methionine.

It belongs to the methyltransferase superfamily. RsmH family.

The protein resides in the cytoplasm. The catalysed reaction is cytidine(1402) in 16S rRNA + S-adenosyl-L-methionine = N(4)-methylcytidine(1402) in 16S rRNA + S-adenosyl-L-homocysteine + H(+). Specifically methylates the N4 position of cytidine in position 1402 (C1402) of 16S rRNA. This is Ribosomal RNA small subunit methyltransferase H from Chlorobium phaeobacteroides (strain DSM 266 / SMG 266 / 2430).